A 365-amino-acid chain; its full sequence is Succinyl-diaminopimelate desuccinylase (365 aa).

H65 lines the Zn(2+) pocket. D67 is a catalytic residue. Position 96 (D96) interacts with Zn(2+). The Proton acceptor role is filled by E126. E127, E155, and H340 together coordinate Zn(2+).

It belongs to the peptidase M20A family. DapE subfamily. Homodimer. It depends on Zn(2+) as a cofactor. Co(2+) serves as cofactor.

The enzyme catalyses N-succinyl-(2S,6S)-2,6-diaminopimelate + H2O = (2S,6S)-2,6-diaminopimelate + succinate. The protein operates within amino-acid biosynthesis; L-lysine biosynthesis via DAP pathway; LL-2,6-diaminopimelate from (S)-tetrahydrodipicolinate (succinylase route): step 3/3. Its function is as follows. Catalyzes the hydrolysis of N-succinyl-L,L-diaminopimelic acid (SDAP), forming succinate and LL-2,6-diaminopimelate (DAP), an intermediate involved in the bacterial biosynthesis of lysine and meso-diaminopimelic acid, an essential component of bacterial cell walls. The protein is Succinyl-diaminopimelate desuccinylase of Campylobacter jejuni subsp. jejuni serotype O:2 (strain ATCC 700819 / NCTC 11168).